We begin with the raw amino-acid sequence, 138 residues long: Small ribosomal subunit protein bS16 (138 aa).

Positions 92–138 (QAAKREADAKQAAKEAAEAKAAAEAEAKAAAEAESADAGAEEAPAEA) are disordered. The span at 94–122 (AKREADAKQAAKEAAEAKAAAEAEAKAAA) shows a compositional bias: basic and acidic residues.

It belongs to the bacterial ribosomal protein bS16 family.

The chain is Small ribosomal subunit protein bS16 from Synechococcus sp. (strain WH7803).